Consider the following 251-residue polypeptide: Triosephosphate isomerase (251 aa).

9 to 11 (NWK) is a binding site for substrate. His-95 serves as the catalytic Electrophile. The active-site Proton acceptor is Glu-167. Substrate contacts are provided by residues Gly-173, Ser-212, and 233–234 (GG).

This sequence belongs to the triosephosphate isomerase family. Homodimer.

It is found in the cytoplasm. It carries out the reaction D-glyceraldehyde 3-phosphate = dihydroxyacetone phosphate. It functions in the pathway carbohydrate biosynthesis; gluconeogenesis. It participates in carbohydrate degradation; glycolysis; D-glyceraldehyde 3-phosphate from glycerone phosphate: step 1/1. In terms of biological role, involved in the gluconeogenesis. Catalyzes stereospecifically the conversion of dihydroxyacetone phosphate (DHAP) to D-glyceraldehyde-3-phosphate (G3P). The sequence is that of Triosephosphate isomerase from Pseudomonas putida (strain W619).